The following is a 356-amino-acid chain: Dihydroorotate dehydrogenase (quinone) (356 aa).

FMN-binding positions include 68–72 (AGFDK) and threonine 92. Lysine 72 provides a ligand contact to substrate. Position 117–121 (117–121 (NRMGF)) interacts with substrate. Residues asparagine 145 and asparagine 178 each contribute to the FMN site. Asparagine 178 is a binding site for substrate. Serine 181 (nucleophile) is an active-site residue. Asparagine 183 serves as a coordination point for substrate. FMN is bound by residues lysine 214 and threonine 242. 243–244 (NT) serves as a coordination point for substrate. Residues glycine 266, glycine 295, and 316–317 (YT) contribute to the FMN site.

The protein belongs to the dihydroorotate dehydrogenase family. Type 2 subfamily. As to quaternary structure, monomer. FMN serves as cofactor.

The protein localises to the cell membrane. The enzyme catalyses (S)-dihydroorotate + a quinone = orotate + a quinol. It functions in the pathway pyrimidine metabolism; UMP biosynthesis via de novo pathway; orotate from (S)-dihydroorotate (quinone route): step 1/1. In terms of biological role, catalyzes the conversion of dihydroorotate to orotate with quinone as electron acceptor. This Mycobacterium sp. (strain KMS) protein is Dihydroorotate dehydrogenase (quinone).